The primary structure comprises 188 residues: Archaemetzincin (188 aa).

Residue His137 coordinates Zn(2+). Glu138 (proton acceptor) is an active-site residue. Zn(2+) is bound by residues His141, His147, Cys148, Cys153, Cys172, and Cys175.

This sequence belongs to the peptidase M54 family. Monomer. Zn(2+) serves as cofactor.

In terms of biological role, probable zinc metalloprotease whose natural substrate is unknown. This chain is Archaemetzincin, found in Pyrococcus abyssi (strain GE5 / Orsay).